Reading from the N-terminus, the 237-residue chain is Ubiquinone biosynthesis O-methyltransferase (237 aa).

S-adenosyl-L-methionine-binding residues include arginine 38, glycine 57, aspartate 78, and methionine 122.

Belongs to the methyltransferase superfamily. UbiG/COQ3 family.

The enzyme catalyses a 3-demethylubiquinol + S-adenosyl-L-methionine = a ubiquinol + S-adenosyl-L-homocysteine + H(+). The catalysed reaction is a 3-(all-trans-polyprenyl)benzene-1,2-diol + S-adenosyl-L-methionine = a 2-methoxy-6-(all-trans-polyprenyl)phenol + S-adenosyl-L-homocysteine + H(+). Its pathway is cofactor biosynthesis; ubiquinone biosynthesis. In terms of biological role, O-methyltransferase that catalyzes the 2 O-methylation steps in the ubiquinone biosynthetic pathway. The polypeptide is Ubiquinone biosynthesis O-methyltransferase (Methylococcus capsulatus (strain ATCC 33009 / NCIMB 11132 / Bath)).